The sequence spans 67 residues: uncharacterized protein (67 aa).

The next 2 membrane-spanning stretches (helical) occupy residues 8 to 28 and 41 to 61; these read MWFA…IYLS and ISSF…VVVF.

The protein resides in the cell membrane. This is an uncharacterized protein from Bacillus subtilis (strain 168).